A 193-amino-acid polypeptide reads, in one-letter code: Oligoribonuclease (193 aa).

The Exonuclease domain maps to Phe20–Leu183. Tyr141 is an active-site residue.

It belongs to the oligoribonuclease family.

Its subcellular location is the cytoplasm. Its function is as follows. 3'-to-5' exoribonuclease specific for small oligoribonucleotides. This chain is Oligoribonuclease, found in Paracidovorax citrulli (strain AAC00-1) (Acidovorax citrulli).